We begin with the raw amino-acid sequence, 209 residues long: ATP-dependent Clp protease proteolytic subunit 2 (209 aa).

The active-site Nucleophile is S106. The active site involves H131.

It belongs to the peptidase S14 family. In terms of assembly, fourteen ClpP subunits assemble into 2 heptameric rings which stack back to back to give a disk-like structure with a central cavity, resembling the structure of eukaryotic proteasomes.

Its subcellular location is the cytoplasm. The enzyme catalyses Hydrolysis of proteins to small peptides in the presence of ATP and magnesium. alpha-casein is the usual test substrate. In the absence of ATP, only oligopeptides shorter than five residues are hydrolyzed (such as succinyl-Leu-Tyr-|-NHMec, and Leu-Tyr-Leu-|-Tyr-Trp, in which cleavage of the -Tyr-|-Leu- and -Tyr-|-Trp bonds also occurs).. Cleaves peptides in various proteins in a process that requires ATP hydrolysis. Has a chymotrypsin-like activity. Plays a major role in the degradation of misfolded proteins. The chain is ATP-dependent Clp protease proteolytic subunit 2 from Mesorhizobium japonicum (strain LMG 29417 / CECT 9101 / MAFF 303099) (Mesorhizobium loti (strain MAFF 303099)).